We begin with the raw amino-acid sequence, 198 residues long: Ribonuclease HII (198 aa).

The region spanning 10–198 (QLVAGVDEVG…PVKRALGLAS (189 aa)) is the RNase H type-2 domain. Residues D16, E17, and D108 each contribute to the a divalent metal cation site.

It belongs to the RNase HII family. Requires Mn(2+) as cofactor. It depends on Mg(2+) as a cofactor.

The protein resides in the cytoplasm. It catalyses the reaction Endonucleolytic cleavage to 5'-phosphomonoester.. Endonuclease that specifically degrades the RNA of RNA-DNA hybrids. The chain is Ribonuclease HII from Escherichia coli O81 (strain ED1a).